The following is a 416-amino-acid chain: Enolase (416 aa).

Residue glutamine 156 participates in (2R)-2-phosphoglycerate binding. Catalysis depends on glutamate 200, which acts as the Proton donor. The Mg(2+) site is built by aspartate 236, glutamate 281, and aspartate 308. (2R)-2-phosphoglycerate contacts are provided by lysine 333, arginine 362, serine 363, and lysine 384. Lysine 333 functions as the Proton acceptor in the catalytic mechanism.

This sequence belongs to the enolase family. Mg(2+) is required as a cofactor.

The protein resides in the cytoplasm. It localises to the secreted. It is found in the cell surface. The catalysed reaction is (2R)-2-phosphoglycerate = phosphoenolpyruvate + H2O. It functions in the pathway carbohydrate degradation; glycolysis; pyruvate from D-glyceraldehyde 3-phosphate: step 4/5. Catalyzes the reversible conversion of 2-phosphoglycerate (2-PG) into phosphoenolpyruvate (PEP). It is essential for the degradation of carbohydrates via glycolysis. The protein is Enolase of Methanothermobacter thermautotrophicus (strain ATCC 29096 / DSM 1053 / JCM 10044 / NBRC 100330 / Delta H) (Methanobacterium thermoautotrophicum).